The sequence spans 365 residues: Phospho-N-acetylmuramoyl-pentapeptide-transferase (365 aa).

The next 10 membrane-spanning stretches (helical) occupy residues Tyr-22 to Gly-42, Thr-74 to Leu-94, Thr-95 to Phe-115, Tyr-133 to Leu-153, Ser-168 to Gly-188, Gly-201 to Glu-221, Leu-240 to Phe-260, Val-267 to Met-287, Leu-292 to Val-312, and Lys-342 to Ile-362.

It belongs to the glycosyltransferase 4 family. MraY subfamily. The cofactor is Mg(2+).

It is found in the cell inner membrane. The enzyme catalyses UDP-N-acetyl-alpha-D-muramoyl-L-alanyl-gamma-D-glutamyl-meso-2,6-diaminopimeloyl-D-alanyl-D-alanine + di-trans,octa-cis-undecaprenyl phosphate = di-trans,octa-cis-undecaprenyl diphospho-N-acetyl-alpha-D-muramoyl-L-alanyl-D-glutamyl-meso-2,6-diaminopimeloyl-D-alanyl-D-alanine + UMP. It functions in the pathway cell wall biogenesis; peptidoglycan biosynthesis. Its function is as follows. Catalyzes the initial step of the lipid cycle reactions in the biosynthesis of the cell wall peptidoglycan: transfers peptidoglycan precursor phospho-MurNAc-pentapeptide from UDP-MurNAc-pentapeptide onto the lipid carrier undecaprenyl phosphate, yielding undecaprenyl-pyrophosphoryl-MurNAc-pentapeptide, known as lipid I. The chain is Phospho-N-acetylmuramoyl-pentapeptide-transferase from Francisella tularensis subsp. tularensis (strain FSC 198).